We begin with the raw amino-acid sequence, 101 residues long: Apolipoprotein C-II (101 aa).

The N-terminal stretch at methionine 1–glycine 22 is a signal peptide. Residues alanine 23–glutamine 28 constitute a propeptide that is removed on maturation. A lipid binding region spans residues threonine 66–isoleucine 74. The segment at serine 78–glutamine 101 is lipoprotein lipase cofactor.

Belongs to the apolipoprotein C2 family. Post-translationally, proapolipoprotein C-II is synthesized as a sialic acid containing glycoprotein which is subsequently desialylated prior to its proteolytic processing. Proapolipoprotein C-II, the major form found in plasma undergoes proteolytic cleavage of its N-terminal hexapeptide to generate apolipoprotein C-II, which occurs as the minor form in plasma.

It is found in the secreted. Component of chylomicrons, very low-density lipoproteins (VLDL), low-density lipoproteins (LDL), and high-density lipoproteins (HDL) in plasma. Plays an important role in lipoprotein metabolism as an activator of lipoprotein lipase. Both proapolipoprotein C-II and apolipoprotein C-II can activate lipoprotein lipase. This chain is Apolipoprotein C-II (APOC2), found in Neomonachus schauinslandi (Hawaiian monk seal).